The following is a 420-amino-acid chain: Putative transporter AmpG 3 (420 aa).

12 helical membrane passes run 6–26 (YLIG…LIFF), 41–61 (IVGS…WSPF), 79–99 (GWAL…LKRS), 104–124 (LCIT…QDIV), 141–161 (IAFT…SVGA), 166–186 (IIFG…VGPI), 230–250 (LLLI…PMAM), 274–294 (LLIM…IGIF), 297–317 (VLIG…LATI), 324–344 (FIIT…IISI), 359–381 (YSIS…GICA), and 386–406 (WPVF…IFYI).

The protein belongs to the major facilitator superfamily.

Its subcellular location is the cell inner membrane. The polypeptide is Putative transporter AmpG 3 (ampG3) (Rickettsia typhi (strain ATCC VR-144 / Wilmington)).